Reading from the N-terminus, the 96-residue chain is Nucleoid-associated protein DR_0199 (96 aa).

The protein belongs to the YbaB/EbfC family. As to quaternary structure, homodimer.

The protein resides in the cytoplasm. Its subcellular location is the nucleoid. Functionally, binds to DNA and alters its conformation. May be involved in regulation of gene expression, nucleoid organization and DNA protection. The protein is Nucleoid-associated protein DR_0199 of Deinococcus radiodurans (strain ATCC 13939 / DSM 20539 / JCM 16871 / CCUG 27074 / LMG 4051 / NBRC 15346 / NCIMB 9279 / VKM B-1422 / R1).